The following is a 213-amino-acid chain: Probable inactive serine/threonine-protein kinase DDB_G0280559 (213 aa).

The Protein kinase domain maps to M1–F211.

It belongs to the protein kinase superfamily. Ser/Thr protein kinase family.

The sequence is that of Probable inactive serine/threonine-protein kinase DDB_G0280559 from Dictyostelium discoideum (Social amoeba).